Here is a 486-residue protein sequence, read N- to C-terminus: Catalase (486 aa).

Positions 1–28 (MENKKLTAANGRPIADNQNSQTAGPRGP) are disordered. Active-site residues include histidine 54 and asparagine 127. A heme-binding site is contributed by tyrosine 337.

It belongs to the catalase family. In terms of assembly, homodimer. Heme serves as cofactor.

It catalyses the reaction 2 H2O2 = O2 + 2 H2O. Functionally, decomposes hydrogen peroxide into water and oxygen; serves to protect cells from the toxic effects of hydrogen peroxide. May be involved in aerotolerance of B.fragilis. The chain is Catalase (katA) from Bacteroides fragilis (strain YCH46).